A 140-amino-acid polypeptide reads, in one-letter code: Putative pre-16S rRNA nuclease (140 aa).

This sequence belongs to the YqgF nuclease family.

The protein resides in the cytoplasm. Functionally, could be a nuclease involved in processing of the 5'-end of pre-16S rRNA. The sequence is that of Putative pre-16S rRNA nuclease from Parabacteroides distasonis (strain ATCC 8503 / DSM 20701 / CIP 104284 / JCM 5825 / NCTC 11152).